Here is a 392-residue protein sequence, read N- to C-terminus: Flavohemoprotein (392 aa).

In terms of domain architecture, Globin spans 1-139; sequence MLNAEQRAII…LADILIGAEE (139 aa). Position 85 (H85) interacts with heme b. Residues Y95 and E138 each act as charge relay system in the active site. Residues 150-392 are reductase; it reads GGWRGTREFR…EFFGPAAALE (243 aa). One can recognise an FAD-binding FR-type domain in the interval 153 to 256; sequence RGTREFRLVR…FPPAGDFTLA (104 aa). FAD is bound by residues Y191 and 205-208; that span reads RNYS. NADP(+) is bound at residue 268 to 273; the sequence is GVGITP. 384-387 serves as a coordination point for FAD; sequence FFGP.

Belongs to the globin family. Two-domain flavohemoproteins subfamily. The protein in the C-terminal section; belongs to the flavoprotein pyridine nucleotide cytochrome reductase family. Heme b serves as cofactor. The cofactor is FAD.

It catalyses the reaction 2 nitric oxide + NADPH + 2 O2 = 2 nitrate + NADP(+) + H(+). The enzyme catalyses 2 nitric oxide + NADH + 2 O2 = 2 nitrate + NAD(+) + H(+). Functionally, is involved in NO detoxification in an aerobic process, termed nitric oxide dioxygenase (NOD) reaction that utilizes O(2) and NAD(P)H to convert NO to nitrate, which protects the bacterium from various noxious nitrogen compounds. Therefore, plays a central role in the inducible response to nitrosative stress. The chain is Flavohemoprotein from Pseudomonas putida (strain ATCC 47054 / DSM 6125 / CFBP 8728 / NCIMB 11950 / KT2440).